The primary structure comprises 454 residues: Pup--protein ligase (454 aa).

Residue Glu9 participates in Mg(2+) binding. Arg53 is an ATP binding site. Tyr55 is a binding site for Mg(2+). The Proton acceptor role is filled by Asp57. A Mg(2+)-binding site is contributed by Glu63. Positions 66 and 420 each coordinate ATP.

This sequence belongs to the Pup ligase/Pup deamidase family. Pup-conjugating enzyme subfamily.

The catalysed reaction is ATP + [prokaryotic ubiquitin-like protein]-L-glutamate + [protein]-L-lysine = ADP + phosphate + N(6)-([prokaryotic ubiquitin-like protein]-gamma-L-glutamyl)-[protein]-L-lysine.. The protein operates within protein degradation; proteasomal Pup-dependent pathway. Its pathway is protein modification; protein pupylation. Catalyzes the covalent attachment of the prokaryotic ubiquitin-like protein modifier Pup to the proteasomal substrate proteins, thereby targeting them for proteasomal degradation. This tagging system is termed pupylation. The ligation reaction involves the side-chain carboxylate of the C-terminal glutamate of Pup and the side-chain amino group of a substrate lysine. In Pseudarthrobacter chlorophenolicus (strain ATCC 700700 / DSM 12829 / CIP 107037 / JCM 12360 / KCTC 9906 / NCIMB 13794 / A6) (Arthrobacter chlorophenolicus), this protein is Pup--protein ligase.